The following is a 247-amino-acid chain: Type III pantothenate kinase (247 aa).

Residue 7–14 (AIGNSRWH) coordinates ATP. Residues Tyr91 and 95–98 (GLDR) each bind substrate. The active-site Proton acceptor is Asp97. K(+) is bound at residue Asp117. Thr120 is an ATP binding site. Position 172 (Thr172) interacts with substrate.

It belongs to the type III pantothenate kinase family. As to quaternary structure, homodimer. It depends on NH4(+) as a cofactor. K(+) serves as cofactor.

The protein resides in the cytoplasm. It catalyses the reaction (R)-pantothenate + ATP = (R)-4'-phosphopantothenate + ADP + H(+). Its pathway is cofactor biosynthesis; coenzyme A biosynthesis; CoA from (R)-pantothenate: step 1/5. Its function is as follows. Catalyzes the phosphorylation of pantothenate (Pan), the first step in CoA biosynthesis. This is Type III pantothenate kinase from Synechococcus elongatus (strain ATCC 33912 / PCC 7942 / FACHB-805) (Anacystis nidulans R2).